The sequence spans 132 residues: MEVNRMNKTGIAHIYASQNNTIIHVTDPTGAETIAMVSGGMVVKNDRDQASPYAAMKAADMVSETLKEHEITDLIIKVRAPGGNKSKIPGPGAQAAIRALSRAGLKIVRIEEVTPIPHDGTKKKGGKRGRRV.

Belongs to the universal ribosomal protein uS11 family. As to quaternary structure, part of the 30S ribosomal subunit.

In terms of biological role, located on the platform of the 30S subunit. This Thermoplasma volcanium (strain ATCC 51530 / DSM 4299 / JCM 9571 / NBRC 15438 / GSS1) protein is Small ribosomal subunit protein uS11.